A 270-amino-acid polypeptide reads, in one-letter code: UPF0354 protein BCE_4835 (270 aa).

Belongs to the UPF0354 family.

The polypeptide is UPF0354 protein BCE_4835 (Bacillus cereus (strain ATCC 10987 / NRS 248)).